The sequence spans 262 residues: Caffeyl-CoA reductase-Etf complex subunit CarD (262 aa).

This sequence belongs to the ETF beta-subunit/FixA family. As to quaternary structure, part of the homotrimeric caffeyl-CoA reductase-Etf complex composed of (R)-2-hydroxyisocaproyl-CoA dehydratase CarC, and the electron transfer flavoprotein (ETF) alpha (CarE) and beta (CarD) subunits. FAD serves as cofactor. Requires AMP as cofactor.

It is found in the cytoplasm. It catalyses the reaction hydrocaffeoyl-CoA + 2 reduced [2Fe-2S]-[ferredoxin] + 2 NAD(+) = (E)-caffeoyl-CoA + 2 oxidized [2Fe-2S]-[ferredoxin] + 2 NADH. Its function is as follows. Caffeyl-CoA reductase-Etf complex catalyzes the reduction of caffeyl-CoA to yield hydrocaffeyl-CoA. It couples the endergonic ferredoxin reduction with NADH as reductant to the exergonic reduction of caffeoyl-CoA with the same reductant. It uses the mechanism of electron bifurcation to overcome the steep energy barrier in ferredoxin reduction. The electron transfer flavoprotein (Etf) mediates the electron transfer between the different donors and acceptors. The complex can also reduce 4-coumaroyl-CoA and feruloyl-CoA. This chain is Caffeyl-CoA reductase-Etf complex subunit CarD, found in Acetobacterium woodii (strain ATCC 29683 / DSM 1030 / JCM 2381 / KCTC 1655 / WB1).